We begin with the raw amino-acid sequence, 451 residues long: F-box/kelch-repeat protein At1g74510 (451 aa).

Residues S93–R139 form the F-box domain. Kelch repeat units follow at residues R137–L188, E193–E236, I237–G284, F286–K333, and A349–F395.

The protein is F-box/kelch-repeat protein At1g74510 of Arabidopsis thaliana (Mouse-ear cress).